The primary structure comprises 156 residues: Small ribosomal subunit protein uS7 (156 aa).

Belongs to the universal ribosomal protein uS7 family. In terms of assembly, part of the 30S ribosomal subunit. Contacts proteins S9 and S11.

In terms of biological role, one of the primary rRNA binding proteins, it binds directly to 16S rRNA where it nucleates assembly of the head domain of the 30S subunit. Is located at the subunit interface close to the decoding center, probably blocks exit of the E-site tRNA. The sequence is that of Small ribosomal subunit protein uS7 from Photorhabdus laumondii subsp. laumondii (strain DSM 15139 / CIP 105565 / TT01) (Photorhabdus luminescens subsp. laumondii).